Consider the following 180-residue polypeptide: Protein NEQ441 (180 aa).

The AMMECR1 domain occupies 1–180 (MNLAKIARKI…VFEGQIFEED (180 aa)).

The sequence is that of Protein NEQ441 from Nanoarchaeum equitans (strain Kin4-M).